The following is a 249-amino-acid chain: Aliphatic sulfonates import ATP-binding protein SsuB 2 (249 aa).

The region spanning 5-233 is the ABC transporter domain; the sequence is LDLLEIRKAY…PRDRRAVELA (229 aa). 37–44 provides a ligand contact to ATP; that stretch reads GPSGCGKS.

It belongs to the ABC transporter superfamily. Aliphatic sulfonates importer (TC 3.A.1.17.2) family. In terms of assembly, the complex is composed of two ATP-binding proteins (SsuB), two transmembrane proteins (SsuC) and a solute-binding protein (SsuA).

Its subcellular location is the cell inner membrane. The enzyme catalyses ATP + H2O + aliphatic sulfonate-[sulfonate-binding protein]Side 1 = ADP + phosphate + aliphatic sulfonateSide 2 + [sulfonate-binding protein]Side 1.. Part of the ABC transporter complex SsuABC involved in aliphatic sulfonates import. Responsible for energy coupling to the transport system. The sequence is that of Aliphatic sulfonates import ATP-binding protein SsuB 2 from Pseudomonas aeruginosa (strain ATCC 15692 / DSM 22644 / CIP 104116 / JCM 14847 / LMG 12228 / 1C / PRS 101 / PAO1).